Reading from the N-terminus, the 411-residue chain is Arginine deiminase (411 aa).

Cysteine 401 acts as the Amidino-cysteine intermediate in catalysis.

This sequence belongs to the arginine deiminase family.

It localises to the cytoplasm. It carries out the reaction L-arginine + H2O = L-citrulline + NH4(+). Its pathway is amino-acid degradation; L-arginine degradation via ADI pathway; carbamoyl phosphate from L-arginine: step 1/2. The polypeptide is Arginine deiminase (Streptococcus equi subsp. equi (strain 4047)).